Here is a 373-residue protein sequence, read N- to C-terminus: Acyl-CoA dehydrogenase FadE27 (373 aa).

FAD is bound by residues arginine 251, histidine 327, and glycine 331.

This sequence belongs to the acyl-CoA dehydrogenase family. In terms of assembly, heterotetramer (dimer of heterodimers) composed of FadE26 and FadE27. FAD is required as a cofactor.

It carries out the reaction (25S)-3-oxocholest-4-en-26-oyl-CoA + A = 3-oxo-cholest-4,24-dien-26-oyl-CoA + AH2. Its pathway is steroid metabolism; cholesterol degradation. With respect to regulation, uncompetitively inhibited by high concentration of 3-OCS-CoA. Functionally, involved in the first cycle of side chain dehydrogenation in the beta-oxidation of cholesterol catabolism. It contributes partly to the virulence by increasing the efficiency of beta-oxidation. Catalyzes the dehydrogenation of acyl-CoA ester side chains of (25S)-3-oxo-cholest-4-en-26-oyl-CoA (3-OCS-CoA) to yield (24E)-3-oxo-cholest-4,24-dien-26-oyl-CoA. Also able to dehydrogenate steroyl-CoA such as 3-oxo-chol-4-en-24-oyl-CoA (3-OCO-CoA) as well as 3-oxo-4-pregnene-20-carboxyl-CoA (3-OPC-CoA). It dehydrogenates only (25S)-OCS-CoA diastereomer. The chain is Acyl-CoA dehydrogenase FadE27 (fadE27) from Mycobacterium tuberculosis (strain ATCC 25618 / H37Rv).